A 324-amino-acid chain; its full sequence is Elongation factor P--(R)-beta-lysine ligase (324 aa).

Residue 75 to 77 (SPE) coordinates substrate. ATP contacts are provided by residues 99 to 101 (RNE) and asparagine 108. Tyrosine 117 lines the substrate pocket. 243 to 244 (EL) contacts ATP. Glutamate 250 provides a ligand contact to substrate. Residue glycine 299 coordinates ATP.

This sequence belongs to the class-II aminoacyl-tRNA synthetase family. EpmA subfamily. As to quaternary structure, homodimer.

It carries out the reaction D-beta-lysine + L-lysyl-[protein] + ATP = N(6)-((3R)-3,6-diaminohexanoyl)-L-lysyl-[protein] + AMP + diphosphate + H(+). Functionally, with EpmB is involved in the beta-lysylation step of the post-translational modification of translation elongation factor P (EF-P). Catalyzes the ATP-dependent activation of (R)-beta-lysine produced by EpmB, forming a lysyl-adenylate, from which the beta-lysyl moiety is then transferred to the epsilon-amino group of a conserved specific lysine residue in EF-P. This chain is Elongation factor P--(R)-beta-lysine ligase, found in Pseudoalteromonas translucida (strain TAC 125).